A 241-amino-acid polypeptide reads, in one-letter code: MTAENRPPVGDKQDKGQAVQEMFASIAPRYDLLNRVLSLGVDRGWRRAAAAEALAHSPRRVLDVATGTGDFAIELKERAPQVEIVGSDFVPQMLDLARQKAGAKQLSIRFEEGDALRLPYPDASFDAVTCAFGFRNFADYTQGLAEMWRVLTPGGRLVLLEFPPPASGLFGAVFRLYFQHVLPRIGALVSGNAGAYTYLPESVLAFPEPERLAQMMRATGFRTRYRALTFGIAGMWVGDKR.

S-adenosyl-L-methionine-binding positions include Thr-68, Asp-88, and 114–115 (DA).

This sequence belongs to the class I-like SAM-binding methyltransferase superfamily. MenG/UbiE family.

The enzyme catalyses a 2-demethylmenaquinol + S-adenosyl-L-methionine = a menaquinol + S-adenosyl-L-homocysteine + H(+). It participates in quinol/quinone metabolism; menaquinone biosynthesis; menaquinol from 1,4-dihydroxy-2-naphthoate: step 2/2. In terms of biological role, methyltransferase required for the conversion of demethylmenaquinol (DMKH2) to menaquinol (MKH2). The polypeptide is Demethylmenaquinone methyltransferase (Deinococcus radiodurans (strain ATCC 13939 / DSM 20539 / JCM 16871 / CCUG 27074 / LMG 4051 / NBRC 15346 / NCIMB 9279 / VKM B-1422 / R1)).